The following is a 433-amino-acid chain: UDP-N-acetylglucosamine 1-carboxyvinyltransferase 1 (433 aa).

Residue 22–23 (KN) coordinates phosphoenolpyruvate. Residue R95 coordinates UDP-N-acetyl-alpha-D-glucosamine. The active-site Proton donor is C119. A 2-(S-cysteinyl)pyruvic acid O-phosphothioketal modification is found at C119. UDP-N-acetyl-alpha-D-glucosamine-binding positions include 124 to 128 (RPVDL), D307, and V329.

Belongs to the EPSP synthase family. MurA subfamily.

Its subcellular location is the cytoplasm. It catalyses the reaction phosphoenolpyruvate + UDP-N-acetyl-alpha-D-glucosamine = UDP-N-acetyl-3-O-(1-carboxyvinyl)-alpha-D-glucosamine + phosphate. Its pathway is cell wall biogenesis; peptidoglycan biosynthesis. Its function is as follows. Cell wall formation. Adds enolpyruvyl to UDP-N-acetylglucosamine. The protein is UDP-N-acetylglucosamine 1-carboxyvinyltransferase 1 of Latilactobacillus sakei subsp. sakei (strain 23K) (Lactobacillus sakei subsp. sakei).